The chain runs to 826 residues: Prominin-1-A (826 aa).

Transmembrane regions (helical) follow at residues 50–70 (YYEPGAIGILFNMMHAFLFVV), 106–126 (VVCAALGLLFTVLLPLVGLLF), and 153–173 (LLTTLLLTTTFIITAGVLCAY). N-linked (GlcNAc...) asparagine glycans are attached at residues Asn178, Asn268, Asn286, Asn327, Asn388, and Asn404. 2 consecutive transmembrane segments (helical) span residues 439–459 (CMIVLILTFNFLGLLCGILGF) and 483–503 (VGFSFLFSWVLMGVITALFLA). N-linked (GlcNAc...) asparagine glycosylation is found at Asn576, Asn582, Asn617, and Asn693.

It belongs to the prominin family.

The protein resides in the apical cell membrane. It is found in the cell projection. Its subcellular location is the microvillus membrane. It localises to the endoplasmic reticulum. The protein localises to the endoplasmic reticulum-Golgi intermediate compartment. Its function is as follows. May play a role in cell differentiation, proliferation and apoptosis. Binds cholesterol in cholesterol-containing plasma membrane microdomains and may play a role in the organization of the apical plasma membrane in epithelial cells. Involved in regulation of MAPK and Akt signaling pathways. This Danio rerio (Zebrafish) protein is Prominin-1-A (prom1a).